The primary structure comprises 389 residues: Succinate--CoA ligase [ADP-forming] subunit beta (389 aa).

The ATP-grasp domain maps to 9 to 244 (KQILRKYGIP…PSQMSNNEAR (236 aa)). Residues Lys-46, 53–55 (GRG), Ile-102, and Glu-107 contribute to the ATP site. 2 residues coordinate Mg(2+): Asn-199 and Asp-213. Residues Asn-264 and 321–323 (GIM) contribute to the substrate site.

Belongs to the succinate/malate CoA ligase beta subunit family. Heterotetramer of two alpha and two beta subunits. Mg(2+) is required as a cofactor.

It carries out the reaction succinate + ATP + CoA = succinyl-CoA + ADP + phosphate. The enzyme catalyses GTP + succinate + CoA = succinyl-CoA + GDP + phosphate. It functions in the pathway carbohydrate metabolism; tricarboxylic acid cycle; succinate from succinyl-CoA (ligase route): step 1/1. In terms of biological role, succinyl-CoA synthetase functions in the citric acid cycle (TCA), coupling the hydrolysis of succinyl-CoA to the synthesis of either ATP or GTP and thus represents the only step of substrate-level phosphorylation in the TCA. The beta subunit provides nucleotide specificity of the enzyme and binds the substrate succinate, while the binding sites for coenzyme A and phosphate are found in the alpha subunit. The chain is Succinate--CoA ligase [ADP-forming] subunit beta from Protochlamydia amoebophila (strain UWE25).